The following is a 395-amino-acid chain: Flap endonuclease 1 (395 aa).

The segment at 1 to 104 (MGIKHLYQVI…GELAKRSARK (104 aa)) is N-domain. Asp-34 provides a ligand contact to Mg(2+). DNA-binding residues include Arg-47 and Arg-70. Asp-86 serves as a coordination point for Mg(2+). The disordered stretch occupies residues 99 to 126 (KRSARKREAHEAHEEAKETGTAEDMEKF). Positions 122–253 (DMEKFSRRTV…NTALKLIREH (132 aa)) are I-domain. Positions 158, 160, 179, and 181 each coordinate Mg(2+). Glu-158 contacts DNA. Positions 231 and 233 each coordinate DNA. Asp-233 is a binding site for Mg(2+). The segment at 341–349 (QQSRLEGFF) is interaction with PCNA. Positions 356 to 389 (EAEKASLKRKHDEKIEEQKKRKKEEAKAKKEAKA) are enriched in basic and acidic residues. Residues 356–395 (EAEKASLKRKHDEKIEEQKKRKKEEAKAKKEAKARPRGAV) form a disordered region.

This sequence belongs to the XPG/RAD2 endonuclease family. FEN1 subfamily. In terms of assembly, interacts with PCNA. Three molecules of fen1 bind to one PCNA trimer with each molecule binding to one PCNA monomer. PCNA stimulates the nuclease activity without altering cleavage specificity. Mg(2+) is required as a cofactor. In terms of processing, phosphorylated. Phosphorylation upon DNA damage induces relocalization to the nuclear plasma.

The protein resides in the nucleus. The protein localises to the nucleolus. It is found in the nucleoplasm. Its subcellular location is the mitochondrion. Structure-specific nuclease with 5'-flap endonuclease and 5'-3' exonuclease activities involved in DNA replication and repair. During DNA replication, cleaves the 5'-overhanging flap structure that is generated by displacement synthesis when DNA polymerase encounters the 5'-end of a downstream Okazaki fragment. It enters the flap from the 5'-end and then tracks to cleave the flap base, leaving a nick for ligation. Also involved in the long patch base excision repair (LP-BER) pathway, by cleaving within the apurinic/apyrimidinic (AP) site-terminated flap. Acts as a genome stabilization factor that prevents flaps from equilibrating into structures that lead to duplications and deletions. Also possesses 5'-3' exonuclease activity on nicked or gapped double-stranded DNA, and exhibits RNase H activity. Also involved in replication and repair of rDNA and in repairing mitochondrial DNA. The protein is Flap endonuclease 1 (fen1) of Talaromyces stipitatus (strain ATCC 10500 / CBS 375.48 / QM 6759 / NRRL 1006) (Penicillium stipitatum).